Here is a 638-residue protein sequence, read N- to C-terminus: Acetolactate synthase 2, chloroplastic (638 aa).

A chloroplast-targeting transit peptide spans 1–39 (MATAATAAAALTGATTATPKSRRRAHHLATRRALAAPIR). Positions 44 to 67 (SRATPTAPPATPLRPWGPNEPRKG) are disordered. Residue Glu112 coordinates thiamine diphosphate. Cys132 and Cys278 are disulfide-bonded. FAD is bound by residues Arg214, 320–341 (HGTV…FGVR), and 363–382 (DIDP…ICAD). The thiamine pyrophosphate binding stretch occupies residues 455 to 535 (QHQMWAAQYY…VKVFVLNNQH (81 aa)). Positions 506 and 533 each coordinate Mg(2+).

It belongs to the TPP enzyme family. Mg(2+) serves as cofactor. The cofactor is thiamine diphosphate.

It localises to the plastid. Its subcellular location is the chloroplast. It carries out the reaction 2 pyruvate + H(+) = (2S)-2-acetolactate + CO2. It functions in the pathway amino-acid biosynthesis; L-isoleucine biosynthesis; L-isoleucine from 2-oxobutanoate: step 1/4. Its pathway is amino-acid biosynthesis; L-valine biosynthesis; L-valine from pyruvate: step 1/4. The chain is Acetolactate synthase 2, chloroplastic (ALS2) from Zea mays (Maize).